The chain runs to 810 residues: Probable inorganic carbon transporter subunit DabA (810 aa).

Residues C347, D349, H509, and C524 each contribute to the Zn(2+) site.

Belongs to the inorganic carbon transporter (TC 9.A.2) DabA family. As to quaternary structure, forms a complex with DabB. Zn(2+) serves as cofactor.

The protein resides in the cell inner membrane. Functionally, part of an energy-coupled inorganic carbon pump. The protein is Probable inorganic carbon transporter subunit DabA of Marinomonas sp. (strain MWYL1).